Reading from the N-terminus, the 251-residue chain is Putative imidazole glycerol phosphate synthase subunit hisF2 (251 aa).

Asp-130 is an active-site residue.

Belongs to the HisA/HisF family. As to quaternary structure, heterodimer of HisH and HisF.

The protein resides in the cytoplasm. It carries out the reaction 5-[(5-phospho-1-deoxy-D-ribulos-1-ylimino)methylamino]-1-(5-phospho-beta-D-ribosyl)imidazole-4-carboxamide + L-glutamine = D-erythro-1-(imidazol-4-yl)glycerol 3-phosphate + 5-amino-1-(5-phospho-beta-D-ribosyl)imidazole-4-carboxamide + L-glutamate + H(+). It participates in amino-acid biosynthesis; L-histidine biosynthesis; L-histidine from 5-phospho-alpha-D-ribose 1-diphosphate: step 5/9. In terms of biological role, IGPS catalyzes the conversion of PRFAR and glutamine to IGP, AICAR and glutamate. The HisF subunit catalyzes the cyclization activity that produces IGP and AICAR from PRFAR using the ammonia provided by the HisH subunit. This chain is Putative imidazole glycerol phosphate synthase subunit hisF2 (hisF2), found in Pseudomonas aeruginosa (strain ATCC 15692 / DSM 22644 / CIP 104116 / JCM 14847 / LMG 12228 / 1C / PRS 101 / PAO1).